The primary structure comprises 295 residues: Probable palmitoyltransferase ZDHHC24 (295 aa).

The Cytoplasmic segment spans residues 1 to 20 (MTSFMSRVWCKVESTGRQLP). A helical membrane pass occupies residues 21–41 (IVLNAVLVFSITAEVSYLVLV). The Extracellular portion of the chain corresponds to 42–60 (EAPFEPEQKKTDWSTIWTG). Residues 61–81 (LHLFAQYFMLGNITWNASLFV) form a helical membrane-spanning segment. Residues 82-151 (KTNPSIRGVF…HNYRYFLTCL (70 aa)) are Cytoplasmic-facing. A DHHC domain is found at 102–152 (RYCYNCETHTPPRCSHCYDCNVCVLRRDHHCVFFGQCVGFHNYRYFLTCLL). Cys-132 functions as the S-palmitoyl cysteine intermediate in the catalytic mechanism. Residues 152-172 (LFMWAGLLYAVVMNAEVFIFI) form a helical membrane-spanning segment. Over 173–176 (LKEG) the chain is Extracellular. Residues 177-197 (VTFHSVMLLLVPWIMLVSGQV) form a helical membrane-spanning segment. Topologically, residues 198–203 (TTRAFA) are cytoplasmic. The helical transmembrane segment at 204–224 (FAFIADTCVVGFLLVAAFLFF) threads the bilayer. The Extracellular portion of the chain corresponds to 225–295 (HVALMLRGQT…SLEPKKQAVH (71 aa)).

It belongs to the DHHC palmitoyltransferase family.

Its subcellular location is the membrane. It carries out the reaction L-cysteinyl-[protein] + hexadecanoyl-CoA = S-hexadecanoyl-L-cysteinyl-[protein] + CoA. In terms of biological role, probable palmitoyltransferase that could catalyze the addition of palmitate onto various protein substrates. The polypeptide is Probable palmitoyltransferase ZDHHC24 (Danio rerio (Zebrafish)).